Reading from the N-terminus, the 277-residue chain is Protein OPG166 (277 aa).

2 N-linked (GlcNAc...) asparagine; by host glycosylation sites follow: Asn29 and Asn58. The next 5 helical transmembrane spans lie at 124-144 (TMLM…EITY), 156-176 (GILQ…AFLF), 186-206 (IIGL…KVFS), 219-239 (LIIY…GLSL), and 247-267 (LLLS…LFLV).

Belongs to the orthopoxvirus OPG166 protein family.

It is found in the host membrane. In terms of biological role, promotes, when overexpressed, the influx of extracellular Ca(2+), leading to membrane permeability and host cell necrosis. This Vaccinia virus (strain Copenhagen) (VACV) protein is Protein OPG166 (OPG166).